We begin with the raw amino-acid sequence, 218 residues long: Deoxyribose-phosphate aldolase (218 aa).

The active-site Proton donor/acceptor is Asp92. The Schiff-base intermediate with acetaldehyde role is filled by Lys155. The active-site Proton donor/acceptor is the Lys184.

The protein belongs to the DeoC/FbaB aldolase family. DeoC type 1 subfamily.

It localises to the cytoplasm. The catalysed reaction is 2-deoxy-D-ribose 5-phosphate = D-glyceraldehyde 3-phosphate + acetaldehyde. Its pathway is carbohydrate degradation; 2-deoxy-D-ribose 1-phosphate degradation; D-glyceraldehyde 3-phosphate and acetaldehyde from 2-deoxy-alpha-D-ribose 1-phosphate: step 2/2. Catalyzes a reversible aldol reaction between acetaldehyde and D-glyceraldehyde 3-phosphate to generate 2-deoxy-D-ribose 5-phosphate. The sequence is that of Deoxyribose-phosphate aldolase from Clostridium kluyveri (strain NBRC 12016).